The sequence spans 1250 residues: Minor capsid protein M1249L (1250 aa).

It belongs to the asfivirus M1249L family. Interacts with the minor capsid protein p17 and with the hexon capsid protein p72 capsomers; these interactions form a rigid zipper structure that stabilizes the capsomers. Interacts with host IRF3.

The protein resides in the virion. Its subcellular location is the host cytoplasm. Its function is as follows. Together with the penton and the other minor capsid proteins (p17, p49), forms a complicated network immediately below the outer capsid shell, stabilizing the whole capsid. In addition, blocks IFN-beta transactivation mediated by the cGAS-STING pathway and regulates the transcriptional activity of IFN-beta. Mechanistically, suppresses the phosphorylation of host key adapter protein TBK1 and degrades host IRF3 in the cytoplasm. This chain is Minor capsid protein M1249L, found in Ornithodoros (relapsing fever ticks).